We begin with the raw amino-acid sequence, 204 residues long: Glycerol-3-phosphate acyltransferase (204 aa).

5 consecutive transmembrane segments (helical) span residues 8–28 (ILIFAYLLGSINSAIIVCYIF), 53–73 (VLAAITLIFDILKGLVPVVIA), 81–101 (FITACTALYAILGHIFPIFFG), 116–136 (FGFSWILGLIFVITWLCVAII), and 155–175 (VIFTSDLQVAAPFLIIAIIIL).

This sequence belongs to the PlsY family. In terms of assembly, probably interacts with PlsX.

The protein localises to the cell inner membrane. It carries out the reaction an acyl phosphate + sn-glycerol 3-phosphate = a 1-acyl-sn-glycero-3-phosphate + phosphate. Its pathway is lipid metabolism; phospholipid metabolism. Catalyzes the transfer of an acyl group from acyl-phosphate (acyl-PO(4)) to glycerol-3-phosphate (G3P) to form lysophosphatidic acid (LPA). This enzyme utilizes acyl-phosphate as fatty acyl donor, but not acyl-CoA or acyl-ACP. The sequence is that of Glycerol-3-phosphate acyltransferase from Francisella tularensis subsp. holarctica (strain OSU18).